Here is a 172-residue protein sequence, read N- to C-terminus: Probable phosphatase YqeG (172 aa).

Has low dephosphorylation activity on GMP and glucose-6-phosphate. The chain is Probable phosphatase YqeG (yqeG) from Bacillus subtilis (strain 168).